The chain runs to 607 residues: MKRKLDVNDVPVPTEEAEAANGKATFASLGLDARLLQGIAKQNFQSPTLVQSKAIPLTLEGRDILARAKTGSGKTAAYLLPILHSILKRKELSPTQCTSALILVPTRELADQVYKTVESFTAFCAKDVRAVNLTQRVSDAVQRSLLADSPDIVIATPARASLNANTSALLLTNLTHMVIDEADLVLSYGYDEDLQNVAKIMPKGVQTVLMSATLTSEVETLKGLFCRNPEVLKLEEAEDEGKGVSQFVVKCAEDEKFLLVYVIFKLKLIKGKCIIFVGDIDRCYRLKLFLEQFGTRSCILNSQLPVNSRIHVVEEFNKNVYDIIIASDEHEVLGDEDEPKPEETEEVEADDASGEKEDAKDAKKETKQPSKKKQKTGKKDKEYGVSRGIDFKNVACVLNFDLPTSSKSYTHRIGRTARAGQTGMALSFVIPSALYRKHKPTSIESAKDDEKVLAKIIKHQAKKGKEVKPYNFDMKQVDAFRYRMGDALRAVTSIAVQEAKAREIRQELMKSEKLKRHFEENPSDLYHLRHDGELRPARVQAHLKHVPDYLLPKEGKKGITGGDIGFVGMHKTTENRIRKARAANKAKGRGKGRKSDPLKTFKAKSRK.

A Q motif motif is present at residues 24–52 (ATFASLGLDARLLQGIAKQNFQSPTLVQS). A Helicase ATP-binding domain is found at 55 to 232 (IPLTLEGRDI…GLFCRNPEVL (178 aa)). 68 to 75 (AKTGSGKT) contacts ATP. Residues 180–183 (DEAD) carry the DEAD box motif. In terms of domain architecture, Helicase C-terminal spans 243–475 (GVSQFVVKCA…EVKPYNFDMK (233 aa)). Disordered regions lie at residues 332–380 (VLGD…GKKD) and 580–607 (ARAA…KSRK). The span at 334 to 352 (GDEDEPKPEETEEVEADDA) shows a compositional bias: acidic residues. A compositionally biased stretch (basic and acidic residues) spans 353–368 (SGEKEDAKDAKKETKQ). Over residues 580–592 (ARAANKAKGRGKG) the composition is skewed to basic residues.

The protein belongs to the DEAD box helicase family. DDX56/DBP9 subfamily.

It localises to the nucleus. It is found in the nucleolus. It carries out the reaction ATP + H2O = ADP + phosphate + H(+). Functionally, ATP-binding RNA helicase involved in the biogenesis of 60S ribosomal subunits and is required for the normal formation of 25S and 5.8S rRNAs. This is ATP-dependent RNA helicase dbp9 (dbp9) from Sclerotinia sclerotiorum (strain ATCC 18683 / 1980 / Ss-1) (White mold).